The following is a 432-amino-acid chain: Adenylosuccinate synthetase (432 aa).

Residues 13-19 (GDEGKGK) and 41-43 (GHT) each bind GTP. The active-site Proton acceptor is the aspartate 14. Aspartate 14 and glycine 41 together coordinate Mg(2+). IMP-binding positions include 14–17 (DEGK), 39–42 (NAGH), threonine 130, arginine 144, glutamine 225, threonine 240, and arginine 304. Catalysis depends on histidine 42, which acts as the Proton donor. 300 to 306 (ATTGRRR) contacts substrate. GTP is bound by residues arginine 306, 332–334 (KLD), and 415–417 (STG).

It belongs to the adenylosuccinate synthetase family. In terms of assembly, homodimer. Requires Mg(2+) as cofactor.

It localises to the cytoplasm. It carries out the reaction IMP + L-aspartate + GTP = N(6)-(1,2-dicarboxyethyl)-AMP + GDP + phosphate + 2 H(+). It participates in purine metabolism; AMP biosynthesis via de novo pathway; AMP from IMP: step 1/2. Its function is as follows. Plays an important role in the de novo pathway of purine nucleotide biosynthesis. Catalyzes the first committed step in the biosynthesis of AMP from IMP. The sequence is that of Adenylosuccinate synthetase from Escherichia coli (strain K12).